Consider the following 285-residue polypeptide: Purine biosynthesis transcriptional repressor PurR (285 aa).

The segment at 1-73 (MKFRRSGRLV…GAAGGVKYIP (73 aa)) is DNA binding domain. Residues 74–285 (KMKQAEAEEF…NLLKNGETES (212 aa)) form an effector binding domain region. Position 102 (tyrosine 102) interacts with guanosine 3',5'-bis(diphosphate). The 5-phospho-alpha-D-ribose 1-diphosphate site is built by alanine 138, threonine 139, lysine 140, and arginine 160. Residues glycine 178 and serine 179 each contribute to the guanosine 3',5'-bis(diphosphate) site. 5-phospho-alpha-D-ribose 1-diphosphate-binding residues include aspartate 203, aspartate 204, phenylalanine 205, lysine 207, and alanine 208. Residue lysine 207 coordinates guanosine 3',5'-bis(diphosphate). Residues glycine 209, glycine 210, and threonine 211 each coordinate guanosine 3',5'-bis(diphosphate). Threonine 211 lines the 5-phospho-alpha-D-ribose 1-diphosphate pocket.

It belongs to the purine/pyrimidine phosphoribosyltransferase family. PurR subfamily. Homodimer.

With respect to regulation, the binding of PurR to DNA, and therefore the repressor activity, is influenced by interaction with the effector molecules 5-phosphoribosyl 1-pyrophosphate (PRPP) and (p)ppGpp. PRPP binds to PurR and reduces affinity of PurR for DNA, which inhibits the repressor activity and induces transcription of the target genes. On the contrary, (p)ppGpp enhances binding of PurR to DNA and repression of the transcription. PRPP and (p)ppGpp compete for PurR binding and allosteric control of transcription. ppGpp maintains PurR-DNA interaction and prevents PRPP from de-repressing PurR regulation during conditions that lead to (p)ppGpp induction, such as upon amino acid starvation. DNA-binding transcriptional repressor that controls the expression of a number of genes involved in the synthesis, metabolism and transport of purines. In response to a signal of excess adenine, represses the transcription of the pur operon, which encodes enzymes of the purine biosynthetic pathway. It also represses the expression of the purA and purR genes. In addition, controls the expression of several other genes or operons, which encode enzymes or transporters playing a role in purine nucleotide metabolism. Acts by binding directly to specific DNA sequences, named PurBoxes, in the upstream control regions of affected genes. Two PurBoxes are required for high-affinity PurR binding. Also responds to amino acid starvation via (p)ppGpp, which strongly increases PurR activity and repression of purine nucleotide biosynthesis genes. The chain is Purine biosynthesis transcriptional repressor PurR from Bacillus subtilis (strain 168).